Consider the following 89-residue polypeptide: Probable Fe(2+)-trafficking protein (89 aa).

This sequence belongs to the Fe(2+)-trafficking protein family.

Its function is as follows. Could be a mediator in iron transactions between iron acquisition and iron-requiring processes, such as synthesis and/or repair of Fe-S clusters in biosynthetic enzymes. The protein is Probable Fe(2+)-trafficking protein of Stenotrophomonas maltophilia (strain K279a).